Consider the following 974-residue polypeptide: Zinc finger protein 280D (974 aa).

Residues K44, K46, K86, K99, K138, K201, K222, K245, K287, and K304 each participate in a glycyl lysine isopeptide (Lys-Gly) (interchain with G-Cter in SUMO2) cross-link. The segment at 188–216 is disordered; that stretch reads KRPSGSDISSVNPKKPKPSENTSGIDASS. 2 C2H2-type zinc fingers span residues 333–355 and 370–393; these read FKCF…MKHH and TTCQ…ESTH. The C2H2-type 3; degenerate zinc finger occupies 400–424; it reads TICKICELSFETEQILLQHMKDNHK. C2H2-type zinc fingers lie at residues 430–453 and 459–481; these read YICQ…RTSH and LLCP…YMKH. Disordered regions lie at residues 507-624, 751-797, and 815-974; these read TQHH…KVNT, IKTE…EGTG, and VTVS…EERS. Positions 539–557 are enriched in low complexity; that stretch reads SGSSVTPSISPSTSTLQLS. S557 is subject to Phosphoserine. Residues 571-587 show a composition bias toward polar residues; sequence KLTTSTPNTTISDPSKA. Residues 591–611 show a composition bias toward low complexity; it reads KSNGSKSKNKSKVSNMQKKQS. The segment covering 612-624 has biased composition (polar residues); it reads TLSSSNKKSKVNT. Residue K752 forms a Glycyl lysine isopeptide (Lys-Gly) (interchain with G-Cter in SUMO2) linkage. Positions 763–775 are enriched in basic and acidic residues; it reads VSKETARHSRAEG. A compositionally biased stretch (polar residues) spans 817-829; it reads VSDTENVSSSKNI. Residues 830-860 show a composition bias toward basic and acidic residues; that stretch reads LSHDPDVGTDTMEKEEKTHHACQEMELKVDQ. A compositionally biased stretch (polar residues) spans 861 to 884; that stretch reads SSESTNPTEAELSSETRQGLQLTS. Residues S904 and S907 each carry the phosphoserine modification. The span at 938–950 shows a compositional bias: polar residues; sequence SANTSDTVSDQTG.

It is found in the nucleus. May function as a transcription factor. This chain is Zinc finger protein 280D (Znf280d), found in Mus musculus (Mouse).